Reading from the N-terminus, the 451-residue chain is Cysteine desulfurase (451 aa).

The pyridoxal 5'-phosphate site is built by alanine 121, threonine 122, glutamine 229, serine 249, and histidine 251. At lysine 252 the chain carries N6-(pyridoxal phosphate)lysine. A pyridoxal 5'-phosphate-binding site is contributed by threonine 289. Cysteine 375 (cysteine persulfide intermediate) is an active-site residue. Residue cysteine 375 coordinates [2Fe-2S] cluster. Cysteine 375 provides a ligand contact to Zn(2+). Cysteine persulfide is present on cysteine 375.

This sequence belongs to the class-V pyridoxal-phosphate-dependent aminotransferase family. NifS/IscS subfamily. In terms of assembly, homodimer. Component of the mitochondrial core iron-sulfur cluster (ISC) complex composed of NFS1, LYRM4, NDUFAB1, ISCU, FXN, and FDX2; this complex is a heterohexamer containing two copies of each monomer. Component of cyteine desulfurase complex composed of NFS1, LYRM4 and NDUFAB1; this complex contributes to the activation of cysteine desulfurase activity and NFS1 stabilization. Interacts (homodimer form) with ISCU (D-state); each monomer interacts with the C-terminal regions of each NFS1 monomer. Interacts with HSPA9. Interacts (via homodimer form) with FDX2. Interacts (via homodimer form) with FXN. Interacts with LYRM4. Component of a complex composed of FXN, NFS1, LYRM4 and ISCU. Monomer. Homodimer. Oligomer. Interacts with ISCU. Component of the cysteine desulfurase complex composed of NFS1 and LYRM4; this complex contributes to the activation of cysteine desulfurase activity. Interacts with MOCS3. Pyridoxal 5'-phosphate serves as cofactor. Post-translationally, N-gluconoylated. Cysteine persulfide intermediate is reduced by thiol-containing molecules like glutathione and L-cysteine. Persulfide reduction is a rate-limiting step of cysteine desulfurase catalytic cycle.

It localises to the mitochondrion. Its subcellular location is the cytoplasm. The protein resides in the nucleus. The protein localises to the cytoskeleton. It is found in the microtubule organizing center. It localises to the centrosome. The enzyme catalyses (sulfur carrier)-H + L-cysteine = (sulfur carrier)-SH + L-alanine. It carries out the reaction L-cysteinyl-[cysteine desulfurase] + L-cysteine = S-sulfanyl-L-cysteinyl-[cysteine desulfurase] + L-alanine. Its activity is regulated as follows. Active only in complex with LYRM4. In terms of biological role, cysteine desulfurase, of the core iron-sulfur cluster (ISC) assembly complex, that catalyzes the desulfuration of L-cysteine to L-alanine, as component of the cysteine desulfurase complex leading to the formation of a cysteine persulfide intermediate at the active site cysteine residue and participates in the [2Fe-2S] clusters assembly on the scaffolding protein ISCU. The persulfide is then transferred on the flexible Cys loop from the catalytic site of NFS1 to the surface of NFS1. After the NFS1-linked persulfide sulfur is transferred to one of the conserved Cys residues of the scaffold, a reaction assisted by FXN. The core iron-sulfur cluster (ISC) assembly complex is involved in the de novo synthesis of a [2Fe-2S] cluster, the first step of the mitochondrial iron-sulfur protein biogenesis. This process is initiated by the cysteine desulfurase complex (NFS1:LYRM4:NDUFAB1) that produces persulfide which is delivered on the scaffold protein ISCU in a FXN-dependent manner. Then this complex is stabilized by FDX2 which provides reducing equivalents to accomplish the [2Fe-2S] cluster assembly. Finally, the [2Fe-2S] cluster is transferred from ISCU to chaperone proteins, including HSCB, HSPA9 and GLRX5. Functionally, may catalyze the desulfuration of L-cysteine to L-alanine as component of the cysteine desulfurase complex (NFS1:LYRM4), leading to the formation of a cysteine persulfide intermediate. Acts as a sulfur donor for MOCS3 by transferring the sulfur of the cysteine persulfide intermediate on MOCS3. The polypeptide is Cysteine desulfurase (Rattus norvegicus (Rat)).